We begin with the raw amino-acid sequence, 91 residues long: Large ribosomal subunit protein eL43 (91 aa).

A C4-type zinc finger spans residues 39 to 60; it reads CSFCGKEAMKRKATGIWNCAKC.

The protein belongs to the eukaryotic ribosomal protein eL43 family.

The sequence is that of Large ribosomal subunit protein eL43 from Caenorhabditis elegans.